The sequence spans 332 residues: Serine, glycine, tyrosine and glutamine-rich protein (332 aa).

A signal peptide spans 1 to 17; the sequence is MMKTVLLLVVLVGVAYC. A disordered region spans residues 39–81; the sequence is SSSSSSSSSSGGGGSSGGGASGGGGGGGSSGGGGASGGGGGGS. Residues 48–81 are compositionally biased toward gly residues; that stretch reads SGGGGSSGGGASGGGGGGGSSGGGGASGGGGGGS.

In terms of tissue distribution, prismatic layer of shell (at protein level). Expressed primarily in the mantle with highest level in the mantle edge and lower level in the mantle pallium.

The protein localises to the secreted. The protein is Serine, glycine, tyrosine and glutamine-rich protein of Margaritifera margaritifera (Freshwater pearl mussel).